Consider the following 221-residue polypeptide: Probable septum site-determining protein MinC (221 aa).

Belongs to the MinC family. As to quaternary structure, interacts with MinD and FtsZ.

Its function is as follows. Cell division inhibitor that blocks the formation of polar Z ring septums. Rapidly oscillates between the poles of the cell to destabilize FtsZ filaments that have formed before they mature into polar Z rings. Prevents FtsZ polymerization. The polypeptide is Probable septum site-determining protein MinC (Aliivibrio salmonicida (strain LFI1238) (Vibrio salmonicida (strain LFI1238))).